Reading from the N-terminus, the 286-residue chain is Release factor glutamine methyltransferase (286 aa).

Residues 121–125 (GTGTG), D144, W172, and N188 contribute to the S-adenosyl-L-methionine site. Residue 188–191 (NPPY) participates in substrate binding.

It belongs to the protein N5-glutamine methyltransferase family. PrmC subfamily.

The enzyme catalyses L-glutaminyl-[peptide chain release factor] + S-adenosyl-L-methionine = N(5)-methyl-L-glutaminyl-[peptide chain release factor] + S-adenosyl-L-homocysteine + H(+). Methylates the class 1 translation termination release factors RF1/PrfA and RF2/PrfB on the glutamine residue of the universally conserved GGQ motif. The chain is Release factor glutamine methyltransferase from Vibrio cholerae serotype O1 (strain ATCC 39315 / El Tor Inaba N16961).